Here is a 453-residue protein sequence, read N- to C-terminus: Bifunctional protein GlmU (453 aa).

The interval 1–226 is pyrophosphorylase; sequence MAFSVVILAA…EIEVEGINNR (226 aa). UDP-N-acetyl-alpha-D-glucosamine is bound by residues 8–11, K22, Q73, and 78–79; these read LAAG and GT. D102 contributes to the Mg(2+) binding site. Residues G137, E151, N166, and N224 each coordinate UDP-N-acetyl-alpha-D-glucosamine. Residue N224 coordinates Mg(2+). A linker region spans residues 227–247; sequence KQLAAIERAFQFEQAQELMMQ. Positions 248 to 453 are N-acetyltransferase; it reads GVSLLDPHRF…SGWQRPTKPE (206 aa). UDP-N-acetyl-alpha-D-glucosamine-binding residues include R330 and K348. Residue H360 is the Proton acceptor of the active site. Positions 363 and 374 each coordinate UDP-N-acetyl-alpha-D-glucosamine. Residues A377, 383–384, S402, A420, and R437 each bind acetyl-CoA; that span reads NY.

It in the N-terminal section; belongs to the N-acetylglucosamine-1-phosphate uridyltransferase family. This sequence in the C-terminal section; belongs to the transferase hexapeptide repeat family. As to quaternary structure, homotrimer. The cofactor is Mg(2+).

It is found in the cytoplasm. It catalyses the reaction alpha-D-glucosamine 1-phosphate + acetyl-CoA = N-acetyl-alpha-D-glucosamine 1-phosphate + CoA + H(+). It carries out the reaction N-acetyl-alpha-D-glucosamine 1-phosphate + UTP + H(+) = UDP-N-acetyl-alpha-D-glucosamine + diphosphate. Its pathway is nucleotide-sugar biosynthesis; UDP-N-acetyl-alpha-D-glucosamine biosynthesis; N-acetyl-alpha-D-glucosamine 1-phosphate from alpha-D-glucosamine 6-phosphate (route II): step 2/2. It functions in the pathway nucleotide-sugar biosynthesis; UDP-N-acetyl-alpha-D-glucosamine biosynthesis; UDP-N-acetyl-alpha-D-glucosamine from N-acetyl-alpha-D-glucosamine 1-phosphate: step 1/1. It participates in bacterial outer membrane biogenesis; LPS lipid A biosynthesis. In terms of biological role, catalyzes the last two sequential reactions in the de novo biosynthetic pathway for UDP-N-acetylglucosamine (UDP-GlcNAc). The C-terminal domain catalyzes the transfer of acetyl group from acetyl coenzyme A to glucosamine-1-phosphate (GlcN-1-P) to produce N-acetylglucosamine-1-phosphate (GlcNAc-1-P), which is converted into UDP-GlcNAc by the transfer of uridine 5-monophosphate (from uridine 5-triphosphate), a reaction catalyzed by the N-terminal domain. This chain is Bifunctional protein GlmU, found in Pseudoalteromonas atlantica (strain T6c / ATCC BAA-1087).